Consider the following 386-residue polypeptide: GTPase Obg (386 aa).

The Obg domain occupies 4–162 (SNFVDYVKIY…RTVILQLKLL (159 aa)). Residues 18-44 (KGGRGSSHFRREKYIPKGGPDGGDGGR) are disordered. An OBG-type G domain is found at 163-329 (ADVGLVGFPN…LKDLLWKELN (167 aa)). GTP contacts are provided by residues 169 to 176 (GFPNAGKS), 194 to 198 (FTTLE), 216 to 219 (DIPG), 283 to 286 (TKSD), and 310 to 312 (SSI). Positions 176 and 196 each coordinate Mg(2+). The disordered stretch occupies residues 357–386 (YIFPVDEDEDDPDEEYEEYWDDDEDEDTRK).

This sequence belongs to the TRAFAC class OBG-HflX-like GTPase superfamily. OBG GTPase family. In terms of assembly, monomer. Mg(2+) serves as cofactor.

Its subcellular location is the cytoplasm. An essential GTPase which binds GTP, GDP and possibly (p)ppGpp with moderate affinity, with high nucleotide exchange rates and a fairly low GTP hydrolysis rate. Plays a role in control of the cell cycle, stress response, ribosome biogenesis and in those bacteria that undergo differentiation, in morphogenesis control. This chain is GTPase Obg, found in Parabacteroides distasonis (strain ATCC 8503 / DSM 20701 / CIP 104284 / JCM 5825 / NCTC 11152).